The sequence spans 284 residues: Tegument protein UL23 (284 aa).

Belongs to the herpesviridae US22 family. As to quaternary structure, interacts with host NMI; this interaction inhibits NMI interaction with STAT1.

It is found in the virion tegument. The protein localises to the host cytoplasm. Functionally, plays a role in the inhibition of host innate immune response by disrupting the interaction between NMI and STAT1. In turn, NMI-mediated transcription of interferon-gamma stimulated genes is inhibited. This chain is Tegument protein UL23 (UL23), found in Homo sapiens (Human).